The primary structure comprises 920 residues: Puromycin-sensitive aminopeptidase (920 aa).

Residues Glu181 and 317–321 (GAMEN) each bind substrate. A Zn(2+)-binding site is contributed by His353. The Proton acceptor role is filled by Glu354. Residues His357 and Glu376 each contribute to the Zn(2+) site. Residue Tyr465 is modified to 3'-nitrotyrosine. The Nuclear localization signal motif lies at 727–731 (RRRFK).

The protein belongs to the peptidase M1 family. As to quaternary structure, monomer. The cofactor is Zn(2+). Widely expressed. Highest expression in brain, particularly the striatum and hippocampus. Expressed in Sertoli cells.

It localises to the cytoplasm. Its subcellular location is the cytosol. The protein localises to the nucleus. It catalyses the reaction Release of an N-terminal amino acid, preferentially alanine, from a wide range of peptides, amides and arylamides.. Strongly inhibited by bestatin, leuhistin, actinonin, amastatin, 1,10-phenanthroline, DFP, PCMBS, Zn(2+), Cd(2+), Co(2+), Cu(2+), Hg(2+), EDTA and puromycin. Not inhibited by PMSF, and only slightly inhibited by leupeptin and aprotinin. Activity is increased by Mg(2+) and Ca(2+). Its function is as follows. Aminopeptidase with broad substrate specificity for several peptides. Involved in proteolytic events essential for cell growth and viability. May act as regulator of neuropeptide activity. Plays a role in the antigen-processing pathway for MHC class I molecules. Involved in the N-terminal trimming of cytotoxic T-cell epitope precursors. Digests the poly-Q peptides found in many cellular proteins. This is Puromycin-sensitive aminopeptidase (Npepps) from Mus musculus (Mouse).